A 398-amino-acid chain; its full sequence is Serine/threonine-protein kinase ppk23 (398 aa).

Residues 74–359 (YEILEKIEEG…AKEALEHPYF (286 aa)) form the Protein kinase domain. ATP contacts are provided by residues 80 to 88 (IEEGSYGIV) and Lys103. The active-site Proton acceptor is the Asp198. The disordered stretch occupies residues 359-398 (FYESPRPKDPKFFPTFPSKAKGESKEKNVFQSFRSASPKK). Polar residues predominate over residues 387 to 398 (VFQSFRSASPKK).

Belongs to the protein kinase superfamily. Ser/Thr protein kinase family.

The protein localises to the nucleus. The enzyme catalyses L-seryl-[protein] + ATP = O-phospho-L-seryl-[protein] + ADP + H(+). It catalyses the reaction L-threonyl-[protein] + ATP = O-phospho-L-threonyl-[protein] + ADP + H(+). This Schizosaccharomyces pombe (strain 972 / ATCC 24843) (Fission yeast) protein is Serine/threonine-protein kinase ppk23 (ppk23).